The primary structure comprises 268 residues: Proliferating cell nuclear antigen (268 aa).

Residues Arg61–Lys80 mediate DNA binding.

Belongs to the PCNA family.

The protein resides in the nucleus. Functionally, this protein is an auxiliary protein of DNA polymerase delta and is involved in the control of eukaryotic DNA replication by increasing the polymerase's processibility during elongation of the leading strand. In Catharanthus roseus (Madagascar periwinkle), this protein is Proliferating cell nuclear antigen.